A 124-amino-acid chain; its full sequence is Heat-labile enterotoxin B chain (124 aa).

An N-terminal signal peptide occupies residues 1–21; the sequence is MNKVKCYVLFTALLSSLYAHG. C30 and C107 are oxidised to a cystine.

As to quaternary structure, heterohexamer of one A chain and of five B chains.

Its function is as follows. The biological activity of the toxin is produced by the A chain, which activates intracellular adenyl cyclase. This chain is Heat-labile enterotoxin B chain (eltB), found in Escherichia coli.